The chain runs to 152 residues: MANLERTFIAIKPDGVQRGLVGEIIKRFEQKGFRLVAMKFLRASEEHLKQHYTDLKDRPFFPGLVKYMNSGPVVAMVWEGLNVVKTGRLMLGETNPADSKPGTIRGDFCIQVGRNIIHGSDSVKSAEKEISLWFKPEELVDYKSCAHDWVYE.

The tract at residues 1-66 (MANLERTFIA…DRPFFPGLVK (66 aa)) is interaction with AKAP13. ATP contacts are provided by K12, F60, R88, T94, R105, and N115. H118 (pros-phosphohistidine intermediate) is an active-site residue.

The protein belongs to the NDK family. As to quaternary structure, hexamer of two different chains: An and B (A6, A5B, A4B2, A3B3, A2B4, AB5, B6). Interacts with CAPN8. Interacts with AKAP13. Interacts with ITGB1BP1 (via C-terminal domain region). Interacts with BCL2L10. Requires Mg(2+) as cofactor.

It is found in the cytoplasm. The protein localises to the cell projection. Its subcellular location is the lamellipodium. It localises to the ruffle. The protein resides in the nucleus. It carries out the reaction a 2'-deoxyribonucleoside 5'-diphosphate + ATP = a 2'-deoxyribonucleoside 5'-triphosphate + ADP. The enzyme catalyses a ribonucleoside 5'-diphosphate + ATP = a ribonucleoside 5'-triphosphate + ADP. The catalysed reaction is ATP + protein L-histidine = ADP + protein N-phospho-L-histidine.. Its function is as follows. Major role in the synthesis of nucleoside triphosphates other than ATP. The ATP gamma phosphate is transferred to the NDP beta phosphate via a ping-pong mechanism, using a phosphorylated active-site intermediate. Negatively regulates Rho activity by interacting with AKAP13/LBC. Acts as a transcriptional activator of the MYC gene; binds DNA non-specifically. Binds to both single-stranded guanine- and cytosine-rich strands within the nuclease hypersensitive element (NHE) III(1) region of the MYC gene promoter. Does not bind to duplex NHE III(1). Has G-quadruplex (G4) DNA-binding activity, which is independent of its nucleotide-binding and kinase activity. Binds both folded and unfolded G4 with similar low nanomolar affinities. Stabilizes folded G4s regardless of whether they are prefolded or not. Exhibits histidine protein kinase activity. The protein is Nucleoside diphosphate kinase B (NME2) of Pongo abelii (Sumatran orangutan).